Reading from the N-terminus, the 362-residue chain is Outer mitochondrial transmembrane helix translocase (362 aa).

The Mitochondrial intermembrane segment spans residues 1 to 19; it reads MVLKEIPTENITRPLGRNE. A helical transmembrane segment spans residues 20 to 42; the sequence is VIGLLFRLTIFGAVTYFTIKWMV. Residues 43–362 are Cytoplasmic-facing; that stretch reads DAIDPTRKQK…HEAFMQVPLD (320 aa). 137 to 144 is a binding site for ATP; it reads GPPGCGKT.

Belongs to the AAA ATPase family. MSP1 subfamily.

The protein localises to the mitochondrion outer membrane. The protein resides in the peroxisome membrane. Its subcellular location is the postsynaptic cell membrane. It catalyses the reaction [protein]-with a C-terminal TM segment(out) + ATP + H2O = [protein]-with a C-terminal TM segment(in) + ADP + phosphate + H(+). In terms of biological role, outer mitochondrial translocase required to remove mislocalized tail-anchored transmembrane proteins on mitochondria. Specifically recognizes and binds tail-anchored transmembrane proteins: acts as a dislocase that mediates the ATP-dependent extraction of mistargeted tail-anchored transmembrane proteins from the mitochondrion outer membrane. Also plays a critical role in regulating the surface expression of AMPA receptors (AMPAR), thereby regulating synaptic plasticity and learning and memory. In Danio rerio (Zebrafish), this protein is Outer mitochondrial transmembrane helix translocase.